We begin with the raw amino-acid sequence, 476 residues long: Sensor protein CzcS (476 aa).

The first 35 residues, 1–35 (MRPGTSITPLSLTRRLGLFFALVLSIALASMGAFA), serve as a signal peptide directing secretion. At 37 to 158 (YSLAAQLEAR…DRKQVTARFR (122 aa)) the chain is on the periplasmic side. Residues 159 to 179 (TTLVLGTTVGVILTALVGAAI) traverse the membrane as a helical segment. The Cytoplasmic portion of the chain corresponds to 180-476 (TRRELEPAHV…RPSQDRPVVG (297 aa)). Residues 181–234 (RRELEPAHVLIKQINRISVERLSYRVDMPPKPTEVRDIASAFNAMLQRLEDGYQ) form the HAMP domain. Positions 242-455 (DLAHDLRTPL…TRFTLRFPLN (214 aa)) constitute a Histidine kinase domain. His245 carries the phosphohistidine; by autocatalysis modification.

The protein resides in the cell inner membrane. The catalysed reaction is ATP + protein L-histidine = ADP + protein N-phospho-L-histidine.. In terms of biological role, member of the two-component regulatory system CzcS/CzcR involved in the control of cobalt, zinc and cadmium homeostasis. Probably activates CzcR by phosphorylation. This is Sensor protein CzcS (czcS) from Cupriavidus metallidurans (strain ATCC 43123 / DSM 2839 / NBRC 102507 / CH34) (Ralstonia metallidurans).